A 237-amino-acid polypeptide reads, in one-letter code: MVVEDTQKSVITEDQYPSRVVSDNNNDDDDDDLEEGEIPVDGEDSGATATTKPPAALARNPHPLENSWTFWFDNPSSKSKQAAWGSSIRPIYTFATVEEFWSIYNNIHHPSKLGLGADFHCFKHKIEPKWEDPICANGGKWTMTFPRGKSDTSWLYTLLAMIGEQFDHGDEICGAVVNVRSRQDKIAIWTKNASNEAAQVSIGKQWKEFLDYNDTIGFIFHEDAKKLDRGAKNKYVV.

Residues 1–61 (MVVEDTQKSV…KPPAALARNP (61 aa)) form a disordered region. The span at 25–44 (NNDDDDDDLEEGEIPVDGED) shows a compositional bias: acidic residues. The segment covering 47-58 (ATATTKPPAALA) has biased composition (low complexity). EIF4G-binding regions lie at residues 62–65 (HPLE) and 72–108 (FDNPSSKSKQAAWGSSIRPIYTFATVEEFWSIYNNIH). MRNA contacts are provided by residues 80–85 (KQAAWG), lysine 112, and 130–131 (WE). The cysteines at positions 135 and 173 are disulfide-linked. The tract at residues 156 to 165 (YTLLAMIGEQ) is EIF4G-binding. MRNA contacts are provided by residues 180 to 185 (RSRQDK) and 225 to 229 (KKLDR).

It belongs to the eukaryotic initiation factor 4E family. EIF4F is a multi-subunit complex, the composition of which varies with external and internal environmental conditions. It is composed of at least EIF4A, EIF4E and EIF4G. EIF4E is also known to interact with other partners. In higher plants two isoforms of EIF4F have been identified, named isoform EIF4F and isoform EIF(iso)4F. Isoform EIF4F has subunits p220 and p26, whereas isoform EIF(iso)4F has subunits p82 and p28. As to quaternary structure, (Microbial infection) Interacts with potyvirus viral genome-linked protein (VPg) in the nucleus; this interaction is possible in susceptible hosts but is impaired in resistant plants. Binds to soybean mosaic virus (SMV) VPg in the nucleus. Interacts with SMV nuclear inclusion protein A (NIa-Pro) and nuclear inclusion protein B (NIb) in the cytoplasm. In terms of processing, according to the redox status, the Cys-135-Cys-173 disulfide bridge may have a role in regulating protein function by affecting its ability to bind capped mRNA. Mostly expressed in roots, flowers, immature pods and mature seeds, and, to a lower extent, in stems and leaves.

The protein localises to the nucleus. It localises to the cytoplasm. Its function is as follows. Component of the protein complex eIF4F, which is involved in the recognition of the mRNA cap, ATP-dependent unwinding of 5'-terminal secondary structure and recruitment of mRNA to the ribosome. Recognizes and binds the 7-methylguanosine-containing mRNA cap during an early step in the initiation of protein synthesis and facilitates ribosome binding by inducing the unwinding of the mRNAs secondary structures. Key component of recessive resistance to potyviruses (e.g. soybean mosaic virus (SMV), bean common mosaic virus (BCMV) and watermelon mosaic virus (WMV), but not bean pod mottle virus (BPMV)). (Microbial infection) Susceptibility host factor required for viral infection by recruiting viral RNAs to the host ribosomal complex via an interaction with viral genome-linked protein (VPg). In Glycine max (Soybean), this protein is Eukaryotic translation initiation factor 4E-1.